A 219-amino-acid polypeptide reads, in one-letter code: Thiamine-phosphate synthase (219 aa).

Residues 44–48 (QLREK) and asparagine 79 contribute to the 4-amino-2-methyl-5-(diphosphooxymethyl)pyrimidine site. Residues aspartate 80 and aspartate 99 each coordinate Mg(2+). Serine 117 is a 4-amino-2-methyl-5-(diphosphooxymethyl)pyrimidine binding site. 143-145 (TST) is a 2-[(2R,5Z)-2-carboxy-4-methylthiazol-5(2H)-ylidene]ethyl phosphate binding site. 4-amino-2-methyl-5-(diphosphooxymethyl)pyrimidine is bound at residue lysine 146. Residues glycine 175 and 195–196 (IS) contribute to the 2-[(2R,5Z)-2-carboxy-4-methylthiazol-5(2H)-ylidene]ethyl phosphate site.

It belongs to the thiamine-phosphate synthase family. Requires Mg(2+) as cofactor.

It carries out the reaction 2-[(2R,5Z)-2-carboxy-4-methylthiazol-5(2H)-ylidene]ethyl phosphate + 4-amino-2-methyl-5-(diphosphooxymethyl)pyrimidine + 2 H(+) = thiamine phosphate + CO2 + diphosphate. The enzyme catalyses 2-(2-carboxy-4-methylthiazol-5-yl)ethyl phosphate + 4-amino-2-methyl-5-(diphosphooxymethyl)pyrimidine + 2 H(+) = thiamine phosphate + CO2 + diphosphate. The catalysed reaction is 4-methyl-5-(2-phosphooxyethyl)-thiazole + 4-amino-2-methyl-5-(diphosphooxymethyl)pyrimidine + H(+) = thiamine phosphate + diphosphate. Its pathway is cofactor biosynthesis; thiamine diphosphate biosynthesis; thiamine phosphate from 4-amino-2-methyl-5-diphosphomethylpyrimidine and 4-methyl-5-(2-phosphoethyl)-thiazole: step 1/1. Functionally, condenses 4-methyl-5-(beta-hydroxyethyl)thiazole monophosphate (THZ-P) and 2-methyl-4-amino-5-hydroxymethyl pyrimidine pyrophosphate (HMP-PP) to form thiamine monophosphate (TMP). The protein is Thiamine-phosphate synthase of Bacillus mycoides (strain KBAB4) (Bacillus weihenstephanensis).